The sequence spans 320 residues: Homoserine kinase (320 aa).

ATP is bound at residue 100–110; it reads PLSSGMGSSAA.

Belongs to the GHMP kinase family. Homoserine kinase subfamily.

The protein resides in the cytoplasm. It catalyses the reaction L-homoserine + ATP = O-phospho-L-homoserine + ADP + H(+). It participates in amino-acid biosynthesis; L-threonine biosynthesis; L-threonine from L-aspartate: step 4/5. In terms of biological role, catalyzes the ATP-dependent phosphorylation of L-homoserine to L-homoserine phosphate. This chain is Homoserine kinase, found in Chlorobium phaeobacteroides (strain BS1).